A 199-amino-acid chain; its full sequence is Peroxynitrite isomerase (199 aa).

Positions glycine 21–glycine 27 match the GXWXGXG motif. Position 190 (histidine 190) interacts with heme b.

It belongs to the nitrobindin family. As to quaternary structure, homodimer. Heme b serves as cofactor.

The catalysed reaction is peroxynitrite = nitrate. The protein operates within nitrogen metabolism. Its function is as follows. Heme-binding protein able to scavenge peroxynitrite and to protect free L-tyrosine against peroxynitrite-mediated nitration, by acting as a peroxynitrite isomerase that converts peroxynitrite to nitrate. Therefore, this protein likely plays a role in peroxynitrite sensing and in the detoxification of reactive nitrogen and oxygen species (RNS and ROS, respectively). Is able to bind nitric oxide (NO) in vitro, but may act as a sensor of peroxynitrite levels in vivo. The chain is Peroxynitrite isomerase from Paenarthrobacter aurescens (strain TC1).